A 226-amino-acid chain; its full sequence is UPF0502 protein Daci_5373 (226 aa).

This sequence belongs to the UPF0502 family.

This Delftia acidovorans (strain DSM 14801 / SPH-1) protein is UPF0502 protein Daci_5373.